Here is a 561-residue protein sequence, read N- to C-terminus: Potassium-transporting ATPase potassium-binding subunit (561 aa).

Helical transmembrane passes span 1–21 (MMAS…LLAR), 62–82 (YLLA…LILM), 132–152 (GLTV…FALM), 173–193 (ITLY…VSQG), 253–273 (FVQM…FGDV), 283–303 (LLWS…WAEV), 327–347 (FGIL…CGAV), 356–376 (ALGG…FGGV), 379–399 (GLYG…LMIG), 416–436 (MTAL…ALAM), 483–503 (MLLA…VLAI), and 526–546 (LFIA…FIPA).

Belongs to the KdpA family. As to quaternary structure, the system is composed of three essential subunits: KdpA, KdpB and KdpC.

The protein localises to the cell inner membrane. Part of the high-affinity ATP-driven potassium transport (or Kdp) system, which catalyzes the hydrolysis of ATP coupled with the electrogenic transport of potassium into the cytoplasm. This subunit binds the periplasmic potassium ions and delivers the ions to the membrane domain of KdpB through an intramembrane tunnel. The sequence is that of Potassium-transporting ATPase potassium-binding subunit from Erwinia tasmaniensis (strain DSM 17950 / CFBP 7177 / CIP 109463 / NCPPB 4357 / Et1/99).